Here is a 1573-residue protein sequence, read N- to C-terminus: Soluble scavenger receptor cysteine-rich domain-containing protein SSC5D (1573 aa).

Positions 1–16 (MRVLACLLAALVGIQA) are cleaved as a signal peptide. One can recognise an SRCR 1 domain in the interval 20 to 120 (LRLADGPHGC…HEEDAGVVCA (101 aa)). Intrachain disulfides connect cysteine 45–cysteine 109, cysteine 58–cysteine 119, and cysteine 89–cysteine 99. The tract at residues 153–192 (EPLVTHAPRPAGNPQNASRKKSPRPKQAKSTRAPLLTTGA) is disordered. Asparagine 168 is a glycosylation site (N-linked (GlcNAc...) asparagine). Positions 170–181 (SRKKSPRPKQAK) are enriched in basic residues. SRCR domains lie at 198-298 (LRLV…LVCT) and 304-404 (LRLA…AVCD). Intrachain disulfides connect cysteine 223/cysteine 287, cysteine 236/cysteine 297, cysteine 267/cysteine 277, cysteine 329/cysteine 393, cysteine 342/cysteine 403, and cysteine 373/cysteine 383. Residues asparagine 376 and asparagine 420 are each glycosylated (N-linked (GlcNAc...) asparagine). Positions 412 to 465 (PPTAPTDSNNSTPREAASRPPSTMTSQAPGTAGVSPPPASPTVLWEPGPEAGSP) are disordered. Positions 431–440 (PPSTMTSQAP) are enriched in polar residues. The SRCR 4 domain occupies 467-568 (LRLVAGPSKC…HNEDVGVTCT (102 aa)). Cystine bridges form between cysteine 492–cysteine 557, cysteine 505–cysteine 567, and cysteine 537–cysteine 547. The interval 614–769 (EKTTTKAPGK…SVSTTGESGL (156 aa)) is disordered. The segment covering 626–637 (KSTKKWVTKNAK) has biased composition (basic residues). Residues 654–671 (AQSPPDLTSQTTAALTTE) show a composition bias toward polar residues. A compositionally biased stretch (basic and acidic residues) spans 672–685 (ASRRPTSEFTRRPT). Polar residues-rich tracts occupy residues 687 to 702 (EAPQ…TLTP) and 711 to 735 (KTMA…SIPQ). One can recognise an SRCR 5 domain in the interval 772–872 (VRLADGPNRC…HEEDVGLTCT (101 aa)). Intrachain disulfides connect cysteine 797–cysteine 861, cysteine 810–cysteine 871, and cysteine 841–cysteine 851. 2 disordered regions span residues 895-1475 (KGTT…PCVA) and 1554-1573 (MPAP…RGDV). The span at 924 to 934 (RLPDTGSKDGY) shows a compositional bias: basic and acidic residues. Pro residues-rich tracts occupy residues 1004-1020 (PPTP…PPGP) and 1083-1093 (TPEPSPTPLPT). The span at 1101–1140 (DPSTPSEVTSLSPTSEQVPESDTTPDLDTTPYSSTVSEYS) shows a compositional bias: polar residues. The span at 1144 to 1160 (DPSPSPHPTTTPDPTMA) shows a compositional bias: pro residues. Low complexity-rich tracts occupy residues 1161 to 1175 (PDPI…TPHF) and 1185 to 1277 (PHPT…MPHP). A compositionally biased stretch (pro residues) spans 1278-1328 (TTTPHPTTTPHPTTTPHPTTTPHPTMTPDPTTTPYPTTTPDPTTTPHPTTP). Composition is skewed to polar residues over residues 1335 to 1354 (VITT…SPTL) and 1364 to 1380 (PQLT…TSQI). Low complexity predominate over residues 1381–1401 (PTLEPSPALESSPSRSSTATS). Pro residues predominate over residues 1464–1475 (GQSPGPHGPCVA).

Interacts with LGALS1 and laminin. Highly expressed in monocytes/macrophages and T-lymphocytes. Highly expressed in placenta and spleen, and also detected at lower levels in colon, and more weakly in lung, heart and kidney.

It localises to the secreted. The protein resides in the cytoplasm. Binds to extracellular matrix proteins. Binds to pathogen-associated molecular patterns (PAMPs) present on the cell walls of Gram-positive and Gram-negative bacteria and fungi, behaving as a pattern recognition receptor (PRR). Induces bacterial and fungal aggregation and subsequent inhibition of PAMP-induced cytokine release. Does not possess intrinsic bactericidal activity. May play a role in the innate defense and homeostasis of certain epithelial surfaces. The chain is Soluble scavenger receptor cysteine-rich domain-containing protein SSC5D (SSC5D) from Homo sapiens (Human).